A 372-amino-acid chain; its full sequence is 3-dehydroquinate synthase (372 aa).

Residues 113–117, 137–138, Lys150, Lys159, and 177–180 each bind NAD(+); these read GVIGD, TS, and TLKT. Zn(2+) is bound by residues Glu192, His257, and His274.

This sequence belongs to the sugar phosphate cyclases superfamily. Dehydroquinate synthase family. Co(2+) serves as cofactor. The cofactor is Zn(2+). It depends on NAD(+) as a cofactor.

It is found in the cytoplasm. It catalyses the reaction 7-phospho-2-dehydro-3-deoxy-D-arabino-heptonate = 3-dehydroquinate + phosphate. Its pathway is metabolic intermediate biosynthesis; chorismate biosynthesis; chorismate from D-erythrose 4-phosphate and phosphoenolpyruvate: step 2/7. Its function is as follows. Catalyzes the conversion of 3-deoxy-D-arabino-heptulosonate 7-phosphate (DAHP) to dehydroquinate (DHQ). The polypeptide is 3-dehydroquinate synthase (Acaryochloris marina (strain MBIC 11017)).